The primary structure comprises 193 residues: Putative manganese efflux pump MntP (193 aa).

6 consecutive transmembrane segments (helical) span residues 6–26 (LLGL…AVGI), 41–61 (YHFG…GTGI), 65–85 (TQSY…ANMI), 107–127 (LIIL…SLSM), 132–152 (IWYP…FGML), and 169–189 (VLGG…NGVF).

The protein belongs to the MntP (TC 9.B.29) family.

The protein resides in the cell inner membrane. In terms of biological role, probably functions as a manganese efflux pump. The protein is Putative manganese efflux pump MntP of Desulfotalea psychrophila (strain LSv54 / DSM 12343).